Consider the following 70-residue polypeptide: uncharacterized protein (70 aa).

A helical membrane pass occupies residues 50–70 (FYLLVFFIILWVSREAFFYLI).

The protein belongs to the M.jannaschii MJ0023/MJ0349/MJ1072/MJ1074/MJ1107/MJECL16 family.

Its subcellular location is the membrane. This is an uncharacterized protein from Methanocaldococcus jannaschii (strain ATCC 43067 / DSM 2661 / JAL-1 / JCM 10045 / NBRC 100440) (Methanococcus jannaschii).